A 135-amino-acid chain; its full sequence is RxLR effector protein PITG_02860 (135 aa).

The signal sequence occupies residues 1–18 (MRLAFLLLAVSHFICGNA). A RxLR-dEER motif is present at residues 48-64 (RKLLRTDERLSEANEER). The segment at 126–135 (LKDPQAFRGP) is NRL1-binding domain.

Belongs to the RxLR effector family. In terms of assembly, interacts with host ubiquitin E3 ligase NRL1.

The protein resides in the secreted. Its subcellular location is the host cytoplasm. The protein localises to the host nucleus. It localises to the host nucleoplasm. Effector that promotes P.infestans virulence and suppresses pattern-triggered immunity (PTI). Interacts with the host ubiquitin E3 ligase NRL1 and enhances the association between NRL1 and SWAP70 to promote proteasome-mediated degradation of SWAP70, which results in the suppression of immunity. This Phytophthora infestans (strain T30-4) (Potato late blight agent) protein is RxLR effector protein PITG_02860.